A 393-amino-acid polypeptide reads, in one-letter code: MQQTKKLTQSDIIIAVMSGPFLQRGEPALISKWYRTKMALANGVDLVVELPYVFATQKAETFANGAISILNALRVSEICFGSEDGQIENFYNTISIQKNEEETFNCLVKQFMDAGNSYAKATSDAFSHILTSEKNIDMSQPNNILGFQYMKAILSQNSSIQAQTIKRFASHYHDETFNDQHIASATSIRKQLFSEEGSFTTIEPFLPQATTSLLANYKQNYGILHNWEQYFSFFKYRLMTMSPGDLRHIYEIEEGLEHRILSKIQNSSSFYSFMEALKTKRYTWTRLQRACTHILTNTTKEDIRSANIEQHAPYIRLLGMSQKGQTYLSKNKKKIELPILTHTKTFDHVALDIEKKANSVYFSIMHEPLRTQLLKQDITHHPIRYDETTTKFL.

ATP-binding residues include glycine 81, asparagine 142, and arginine 167.

It belongs to the TmcAL family.

Its subcellular location is the cytoplasm. It carries out the reaction cytidine(34) in elongator tRNA(Met) + acetate + ATP = N(4)-acetylcytidine(34) in elongator tRNA(Met) + AMP + diphosphate. Its function is as follows. Catalyzes the formation of N(4)-acetylcytidine (ac(4)C) at the wobble position of elongator tRNA(Met), using acetate and ATP as substrates. First activates an acetate ion to form acetyladenylate (Ac-AMP) and then transfers the acetyl group to tRNA to form ac(4)C34. This chain is tRNA(Met) cytidine acetate ligase, found in Bacillus cereus (strain ATCC 14579 / DSM 31 / CCUG 7414 / JCM 2152 / NBRC 15305 / NCIMB 9373 / NCTC 2599 / NRRL B-3711).